The sequence spans 677 residues: Methionine--tRNA ligase (677 aa).

The 'HIGH' region signature appears at 15 to 25 (PYANGSIHLGH). Positions 146, 149, 159, and 162 each coordinate Zn(2+). The 'KMSKS' region signature appears at 333–337 (KMSKS). An ATP-binding site is contributed by K336. Residues 575–677 (DFAKVDLRVA…AGAKPGHQVK (103 aa)) enclose the tRNA-binding domain.

The protein belongs to the class-I aminoacyl-tRNA synthetase family. MetG type 1 subfamily. Homodimer. The cofactor is Zn(2+).

The protein resides in the cytoplasm. The enzyme catalyses tRNA(Met) + L-methionine + ATP = L-methionyl-tRNA(Met) + AMP + diphosphate. Its function is as follows. Is required not only for elongation of protein synthesis but also for the initiation of all mRNA translation through initiator tRNA(fMet) aminoacylation. The protein is Methionine--tRNA ligase of Shigella sonnei (strain Ss046).